Reading from the N-terminus, the 78-residue chain is Large ribosomal subunit protein uL10 (78 aa).

Positions 40–50 are enriched in low complexity; the sequence is AAAAAATAPAA. The interval 40-78 is disordered; sequence AAAAAATAPAAETKKEEKKEEKKEETEESDDDIGLSLFH. Basic and acidic residues predominate over residues 51-64; it reads ETKKEEKKEEKKEE.

Belongs to the universal ribosomal protein uL10 family. In terms of assembly, P0 forms a pentameric complex by interaction with dimers of P1 and P2.

Its subcellular location is the nucleus. The protein resides in the cytoplasm. Functionally, ribosomal protein P0 is the functional equivalent of E.coli protein L10. This chain is Large ribosomal subunit protein uL10, found in Culicoides nubeculosus (Biting midge).